Consider the following 345-residue polypeptide: Erythronate-4-phosphate dehydrogenase (345 aa).

Ser45 lines the substrate pocket. Asp146 and Thr174 together coordinate NAD(+). Arg207 is a catalytic residue. Asp227 contributes to the NAD(+) binding site. Residue Glu232 is part of the active site. His249 (proton donor) is an active-site residue. Position 252 (Gly252) interacts with NAD(+).

The protein belongs to the D-isomer specific 2-hydroxyacid dehydrogenase family. PdxB subfamily. As to quaternary structure, homodimer.

The protein resides in the cytoplasm. The enzyme catalyses 4-phospho-D-erythronate + NAD(+) = (R)-3-hydroxy-2-oxo-4-phosphooxybutanoate + NADH + H(+). It participates in cofactor biosynthesis; pyridoxine 5'-phosphate biosynthesis; pyridoxine 5'-phosphate from D-erythrose 4-phosphate: step 2/5. Catalyzes the oxidation of erythronate-4-phosphate to 3-hydroxy-2-oxo-4-phosphonooxybutanoate. The polypeptide is Erythronate-4-phosphate dehydrogenase (Ruthia magnifica subsp. Calyptogena magnifica).